The chain runs to 214 residues: Transcriptional regulatory protein MctR (214 aa).

One can recognise a Response regulatory domain in the interval 8–124 (RVLLIDNHPL…EIVSAIETVA (117 aa)). A 4-aspartylphosphate modification is found at D59. In terms of domain architecture, HTH luxR-type spans 143–208 (VEEGSDPLTP…GLIRYALDHG (66 aa)). The segment at residues 167–186 (NKEIAETLGITSATAETHRK) is a DNA-binding region (H-T-H motif).

It localises to the cytoplasm. Its function is as follows. Member of the two-component regulatory system MctS/MctR, which activates mctP expression. The sequence is that of Transcriptional regulatory protein MctR from Rhizobium johnstonii (strain DSM 114642 / LMG 32736 / 3841) (Rhizobium leguminosarum bv. viciae).